The chain runs to 240 residues: tRNA (guanine-N(7)-)-methyltransferase (240 aa).

A disordered region spans residues 1–20 (MTESHDTPITPDGEARPHRR). E70, E95, D122, and D145 together coordinate S-adenosyl-L-methionine. D145 is a catalytic residue. Residues K149, D181, and 218 to 221 (TKFE) each bind substrate.

Belongs to the class I-like SAM-binding methyltransferase superfamily. TrmB family.

It catalyses the reaction guanosine(46) in tRNA + S-adenosyl-L-methionine = N(7)-methylguanosine(46) in tRNA + S-adenosyl-L-homocysteine. It functions in the pathway tRNA modification; N(7)-methylguanine-tRNA biosynthesis. Its function is as follows. Catalyzes the formation of N(7)-methylguanine at position 46 (m7G46) in tRNA. The sequence is that of tRNA (guanine-N(7)-)-methyltransferase from Pseudomonas putida (strain ATCC 47054 / DSM 6125 / CFBP 8728 / NCIMB 11950 / KT2440).